The sequence spans 370 residues: Homospermidine synthase 2 (370 aa).

This sequence belongs to the deoxyhypusine synthase family. As to quaternary structure, homotetramer. Requires NAD(+) as cofactor. In terms of processing, the N-terminus is blocked. In terms of tissue distribution, expressed in roots.

The enzyme catalyses putrescine + spermidine = sym-homospermidine + propane-1,3-diamine. It functions in the pathway alkaloid biosynthesis; pyrrolizidine alkaloid biosynthesis. Its function is as follows. Catalyzes the transfer of an aminobutyl unit from spermidine onto putrescine. The resulting polyamine homospermidine is a precursor in the biosynthesis of pyrrolizidine alkaloids. The protein is Homospermidine synthase 2 of Senecio vernalis (Spring groundsel).